A 294-amino-acid chain; its full sequence is ATP phosphoribosyltransferase (294 aa).

The protein belongs to the ATP phosphoribosyltransferase family. Long subfamily. Mg(2+) serves as cofactor.

The protein resides in the cytoplasm. It catalyses the reaction 1-(5-phospho-beta-D-ribosyl)-ATP + diphosphate = 5-phospho-alpha-D-ribose 1-diphosphate + ATP. Its pathway is amino-acid biosynthesis; L-histidine biosynthesis; L-histidine from 5-phospho-alpha-D-ribose 1-diphosphate: step 1/9. With respect to regulation, feedback inhibited by histidine. Catalyzes the condensation of ATP and 5-phosphoribose 1-diphosphate to form N'-(5'-phosphoribosyl)-ATP (PR-ATP). Has a crucial role in the pathway because the rate of histidine biosynthesis seems to be controlled primarily by regulation of HisG enzymatic activity. The sequence is that of ATP phosphoribosyltransferase from Pelodictyon phaeoclathratiforme (strain DSM 5477 / BU-1).